The sequence spans 642 residues: Threonine--tRNA ligase (642 aa).

The region spanning 1–61 (MPVITLPDGS…ETDATLSIIT (61 aa)) is the TGS domain. The catalytic stretch occupies residues 243–534 (DHRKIGKQLD…LTEETAGYFP (292 aa)). Residues C334, H385, and H511 each coordinate Zn(2+).

This sequence belongs to the class-II aminoacyl-tRNA synthetase family. In terms of assembly, homodimer. The cofactor is Zn(2+).

It localises to the cytoplasm. The enzyme catalyses tRNA(Thr) + L-threonine + ATP = L-threonyl-tRNA(Thr) + AMP + diphosphate + H(+). Functionally, catalyzes the attachment of threonine to tRNA(Thr) in a two-step reaction: L-threonine is first activated by ATP to form Thr-AMP and then transferred to the acceptor end of tRNA(Thr). Also edits incorrectly charged L-seryl-tRNA(Thr). This chain is Threonine--tRNA ligase, found in Tolumonas auensis (strain DSM 9187 / NBRC 110442 / TA 4).